Reading from the N-terminus, the 365-residue chain is Putative agmatine deiminase (365 aa).

Cys356 serves as the catalytic Amidino-cysteine intermediate.

Belongs to the agmatine deiminase family.

It carries out the reaction agmatine + H2O = N-carbamoylputrescine + NH4(+). The sequence is that of Putative agmatine deiminase from Latilactobacillus sakei subsp. sakei (strain 23K) (Lactobacillus sakei subsp. sakei).